The following is a 1252-amino-acid chain: DNA-directed RNA polymerase subunit beta (1252 aa).

This sequence belongs to the RNA polymerase beta chain family. As to quaternary structure, the RNAP catalytic core consists of 2 alpha, 1 beta, 1 beta' and 1 omega subunit. When a sigma factor is associated with the core the holoenzyme is formed, which can initiate transcription.

The catalysed reaction is RNA(n) + a ribonucleoside 5'-triphosphate = RNA(n+1) + diphosphate. Functionally, DNA-dependent RNA polymerase catalyzes the transcription of DNA into RNA using the four ribonucleoside triphosphates as substrates. This Chlamydia abortus (strain DSM 27085 / S26/3) (Chlamydophila abortus) protein is DNA-directed RNA polymerase subunit beta.